The primary structure comprises 356 residues: MKASIEQLEPYVPEKPLATLQAELGLTELVRLSANENPYGTSPKVATAVKNWDFTQSNRYPDADAQELRQAVAQQQGIDPNSIVFSVGLDEMIVMLSRTFLATNDQVLVSAPTFSEYGLHAEIEGGQLISVPTLPNDHVNFEGLMKAITPHVKMVWLCNPNNPTGTVESLAAIEAFVQQVPPETMVLIDEAYIDFTPGAAQVTAMQLPAKYPNVVVMRTFSKAYGLANFRIGYAVFNTKYAATMQTIRLPYNVNSLAQVAALAAIDDPNFVKQTVQKNATERAKWMAFFDDQGVTYDQSGANFIFFKYPSATQLADYLVHHGYLIRTGLRPGWLRLTVGTANDNQQLQQLIREFKA.

Lys-222 carries the N6-(pyridoxal phosphate)lysine modification.

The protein belongs to the class-II pyridoxal-phosphate-dependent aminotransferase family. Histidinol-phosphate aminotransferase subfamily. In terms of assembly, homodimer. The cofactor is pyridoxal 5'-phosphate.

The enzyme catalyses L-histidinol phosphate + 2-oxoglutarate = 3-(imidazol-4-yl)-2-oxopropyl phosphate + L-glutamate. Its pathway is amino-acid biosynthesis; L-histidine biosynthesis; L-histidine from 5-phospho-alpha-D-ribose 1-diphosphate: step 7/9. In Lactiplantibacillus plantarum (strain ATCC BAA-793 / NCIMB 8826 / WCFS1) (Lactobacillus plantarum), this protein is Histidinol-phosphate aminotransferase.